Here is a 336-residue protein sequence, read N- to C-terminus: Galactose/methyl galactoside import permease protein MglC (336 aa).

The next 9 membrane-spanning stretches (helical) occupy residues 17–37 (GIYV…PTFL), 53–73 (IIIA…LSAG), 107–127 (LVIL…GIII), 128–148 (AYLN…VYGI), 181–201 (FRLS…WVLW), 227–247 (VALN…FGGL), 257–277 (TNNL…VGGV), 279–299 (FSGG…FTVI), and 306–326 (IGVN…FAVA).

The protein belongs to the binding-protein-dependent transport system permease family. AraH/RbsC subfamily. In terms of assembly, the complex is composed of one ATP-binding protein (MglA), two transmembrane proteins (MglC) and a solute-binding protein (MglB).

Its subcellular location is the cell inner membrane. Functionally, part of the ABC transporter complex MglABC involved in galactose/methyl galactoside import. Probably responsible for the translocation of the substrate across the membrane. The polypeptide is Galactose/methyl galactoside import permease protein MglC (mglC) (Salmonella typhimurium (strain LT2 / SGSC1412 / ATCC 700720)).